The sequence spans 251 residues: MEFLKRHEGHMHMSDSATSMVTSATSAVMDMASATMSMTMSSSTSSSSGMAMEGMDHGSSHMAMNMWLTASFKDYPVVFKDLRASTKAQAFGIFVLLFFVAFLARMLEFVRNYLEEIVWKNNNYAEVEQGISQHSANLQSPPVKSCCDDNAKEVVSDESIDKQNSPQHEETTKARGTGKSLSLASTISRDIIRLALCIIPDLFAYSLMLAAMTYTLTYFFAVVIGSGVGRFVAERLMEHYRIKRGPPRNCC.

Residues 90-110 (AFGIFVLLFFVAFLARMLEFV) form a helical membrane-spanning segment. Residues 157–173 (DESIDKQNSPQHEETTK) are compositionally biased toward basic and acidic residues. The disordered stretch occupies residues 157–176 (DESIDKQNSPQHEETTKARG). A helical membrane pass occupies residues 208–228 (MLAAMTYTLTYFFAVVIGSGV).

As to quaternary structure, oligomer.

The protein resides in the cell membrane. Required for high affinity copper (probably reduced Cu I) transport into the cell. The protein is Copper transport protein CTR1 (CTR1) of Candida albicans (strain SC5314 / ATCC MYA-2876) (Yeast).